Here is a 246-residue protein sequence, read N- to C-terminus: Osmotin-like protein OSML13 (246 aa).

The first 21 residues, 1–21, serve as a signal peptide directing secretion; the sequence is MAYLRSSFVFFLLAFVTYTYA. Intrachain disulfides connect C30–C225, C72–C82, C87–C93, C141–C213, C146–C196, C154–C164, C168–C177, and C178–C183.

It belongs to the thaumatin family.

The sequence is that of Osmotin-like protein OSML13 from Solanum commersonii (Commerson's wild potato).